The sequence spans 398 residues: Endoglucanase (398 aa).

The N-terminal stretch at 1–23 (MSPLKCMALAALGAVMFVGSAQA) is a signal peptide. The active-site Proton donor is E58. D119 (nucleophile) is an active-site residue.

This sequence belongs to the glycosyl hydrolase 8 (cellulase D) family.

The protein localises to the secreted. The catalysed reaction is Endohydrolysis of (1-&gt;4)-beta-D-glucosidic linkages in cellulose, lichenin and cereal beta-D-glucans.. Its pathway is glycan metabolism; bacterial cellulose biosynthesis. Hydrolyzes carboxymethylcellulose. The chain is Endoglucanase (bcsZ) from Pseudomonas fluorescens (strain SBW25).